Here is a 680-residue protein sequence, read N- to C-terminus: Galactose oxidase (680 aa).

An N-terminal signal peptide occupies residues 1–24; it reads MKHLLTLALCFSSINAVAVTVPHK. The propeptide occupies 25-41; it reads AVGTGIPEGSLQFLSLR. In terms of domain architecture, F5/8 type C spans 42-189; the sequence is ASAPIGSAIS…SIAEINVFQA (148 aa). The cysteines at positions 59 and 68 are disulfide-linked. 5 Kelch repeats span residues 223–268, 279–321, 323–372, 436–490, and 492–544; these read RVLM…HDMF, QIVV…TMSD, RVFT…LYRS, KILT…VLPD, and STFI…LLLP. Positions 269-313 form a cross-link, 3'-(S-cysteinyl)-tyrosine (Cys-Tyr); sequence CPGISMDGNGQIVVTGGNDAKKTSLYDSSSDSWIPGPDMQVARGY. Residue Tyr-313 coordinates Cu cation. Residues Tyr-536 and His-537 each coordinate Cu cation. Tyr-536 serves as the catalytic Proton acceptor. An intrachain disulfide couples Cys-556 to Cys-559. His-622 is a binding site for Cu cation.

In terms of assembly, monomer. Cu(2+) serves as cofactor. In terms of processing, galactose oxidase contains a protein-derived free radical cofactor. In the active state, Tyr-313, which is cross-linked to Cys-269 via a thioether bond, is oxidized to a radical and acts with Cu(2+) as a two-electron acceptor in the oxidation reaction. The cross-link is believed to modulate the redox potential of the tyrosyl radical, which is further stabilized by a stacking interaction with Trp-331 in the active site. The post-translational formation of the cross-link is closely linked to the propeptide cleavage event, and both are copper-dependent, autocatalytic processes. The propeptide may act as an intramolecular chaperone, facilitating thioester bond formation and copper binding by positioning of active-site residues, including copper ligands.

Its subcellular location is the secreted. The catalysed reaction is D-galactose + O2 = D-galacto-hexodialdose + H2O2. Its activity is regulated as follows. Inhibited by diethyldithiocarbamate. Functionally, catalyzes the sterospecific oxidation of primary alcohols to the corresponding aldehydes. The biologically relevant substrate of the enzyme is not known as the enzyme exhibits broad substrate specificity from small alcohols through sugars to oligo- and polysaccharides. The chain is Galactose oxidase (GAOA) from Gibberella zeae (Wheat head blight fungus).